Consider the following 228-residue polypeptide: Prolactin-2A1 (228 aa).

The signal sequence occupies residues 1-29 (MQLSITHPCCWTLRLLLVSNLLLWENVAL). 2 disulfides stabilise this stretch: Cys87–Cys203 and Cys220–Cys228.

The protein belongs to the somatotropin/prolactin family. Expressed specifically in the placenta. Highly expressed in invasive trophoblast cells lining the central placental vessel.

It is found in the secreted. The polypeptide is Prolactin-2A1 (Prl2a1) (Rattus norvegicus (Rat)).